The primary structure comprises 383 residues: Acetylornithine deacetylase (383 aa).

Residue histidine 80 participates in Zn(2+) binding. Residue aspartate 82 is part of the active site. Aspartate 112 contacts Zn(2+). Residue glutamate 144 is part of the active site. The Zn(2+) site is built by glutamate 145, glutamate 169, and histidine 355.

This sequence belongs to the peptidase M20A family. ArgE subfamily. As to quaternary structure, homodimer. Zn(2+) is required as a cofactor. Requires Co(2+) as cofactor. It depends on glutathione as a cofactor.

It is found in the cytoplasm. It carries out the reaction N(2)-acetyl-L-ornithine + H2O = L-ornithine + acetate. It participates in amino-acid biosynthesis; L-arginine biosynthesis; L-ornithine from N(2)-acetyl-L-ornithine (linear): step 1/1. Its function is as follows. Catalyzes the hydrolysis of the amide bond of N(2)-acetylated L-amino acids. Cleaves the acetyl group from N-acetyl-L-ornithine to form L-ornithine, an intermediate in L-arginine biosynthesis pathway, and a branchpoint in the synthesis of polyamines. The protein is Acetylornithine deacetylase of Erwinia tasmaniensis (strain DSM 17950 / CFBP 7177 / CIP 109463 / NCPPB 4357 / Et1/99).